The chain runs to 398 residues: Serine/threonine-protein kinase ppk23 (398 aa).

The Protein kinase domain occupies 74-359; sequence YEILEKIEEG…AKEALEHPYF (286 aa). ATP is bound by residues 80–88 and lysine 103; that span reads IEEGSYGIV. The Proton acceptor role is filled by aspartate 198. Residues 359–398 are disordered; that stretch reads FYESPRPKDPKFFPTFPSKAKGESKEKNVFQSFRSASPKK. The segment covering 387-398 has biased composition (polar residues); it reads VFQSFRSASPKK.

It belongs to the protein kinase superfamily. Ser/Thr protein kinase family.

The protein localises to the nucleus. The catalysed reaction is L-seryl-[protein] + ATP = O-phospho-L-seryl-[protein] + ADP + H(+). It catalyses the reaction L-threonyl-[protein] + ATP = O-phospho-L-threonyl-[protein] + ADP + H(+). The polypeptide is Serine/threonine-protein kinase ppk23 (ppk23) (Schizosaccharomyces pombe (strain 972 / ATCC 24843) (Fission yeast)).